We begin with the raw amino-acid sequence, 338 residues long: Lipoate-protein ligase A (338 aa).

The region spanning 29–216 (PATQRVLFLW…AFFAHYGERV (188 aa)) is the BPL/LPL catalytic domain. Residues R71, 76 to 79 (GAVF), and K134 contribute to the ATP site. A (R)-lipoate-binding site is contributed by K134.

It belongs to the LplA family. Monomer.

Its subcellular location is the cytoplasm. It carries out the reaction L-lysyl-[lipoyl-carrier protein] + (R)-lipoate + ATP = N(6)-[(R)-lipoyl]-L-lysyl-[lipoyl-carrier protein] + AMP + diphosphate + H(+). It participates in protein modification; protein lipoylation via exogenous pathway; protein N(6)-(lipoyl)lysine from lipoate: step 1/2. The protein operates within protein modification; protein lipoylation via exogenous pathway; protein N(6)-(lipoyl)lysine from lipoate: step 2/2. Functionally, catalyzes both the ATP-dependent activation of exogenously supplied lipoate to lipoyl-AMP and the transfer of the activated lipoyl onto the lipoyl domains of lipoate-dependent enzymes. This Escherichia coli O9:H4 (strain HS) protein is Lipoate-protein ligase A.